Here is a 634-residue protein sequence, read N- to C-terminus: MDLWQLLLTLAVAGSSDAFSGSEATPAFLVRASQSLQILYPVLETNSSGNPKFTKCRSPELETFSCHWTDGANHSLQSPGSVQMFYIRRDIQEWKECPDYVSAGENSCYFNSSYTSVWTPYCIKLTSNGGIVDHKCFSVEDIVQPDPPVGLNWTLLNISLTEIHADILVKWEPPPNTDVKMGWIILEYELHYKELNETQWKMMDPLMVTSVPMYSLRLDKEYEVRVRTRQRNTEKYGKFSEVLLITFPQMNPSACEEDFQFPWFLIIMFGILGLAVTLFLLIFSKQQRIKMLILPPVPVPKIKGIDPDLLKEGKLEEVNTILAIHDNYKHEFYNDDSWVEFIELDIDDPDEKTEGSDTDRLLSNDHEKSLNIFGAKDDDSGRTSCYEPDILEADFHVSDMCDGTSEVAQPQRLKGEADISCLDQKNQNNSPSNDAAPANQQPSVIHVEENKPRPLLIGGTESTHQAVHHQLSNPSSLANIDFYAQVSDITPAGNVVLSPGQKNKTGNPQCDTHPEVVTSCQANFIVDNAYFCEVDAKKYIALAPHVEAESHVEPSFNQEDIYITTESLTTTAGRSGTAEHVPSSEIPVPDYTSIHIVQSPQGLVLNATALPLPDKEFLSSCGYVSTDQLNKIMP.

A signal peptide spans 1 to 18 (MDLWQLLLTLAVAGSSDA). The Extracellular portion of the chain corresponds to 19 to 260 (FSGSEATPAF…NPSACEEDFQ (242 aa)). Asn46 carries an N-linked (GlcNAc...) asparagine glycan. A disulfide bridge links Cys56 with Cys66. Asn73 is a glycosylation site (N-linked (GlcNAc...) asparagine). Cys97 and Cys108 are joined by a disulfide. Asn111 is a glycosylation site (N-linked (GlcNAc...) asparagine). A disulfide bridge links Cys122 with Cys136. Positions 147–250 (PPVGLNWTLL…EVLLITFPQM (104 aa)) constitute a Fibronectin type-III domain. 3 N-linked (GlcNAc...) asparagine glycosylation sites follow: Asn152, Asn157, and Asn196. Residues 236–240 (YGKFS) carry the WSXWS motif motif. A helical transmembrane segment spans residues 261–284 (FPWFLIIMFGILGLAVTLFLLIFS). Residues 285–634 (KQQRIKMLIL…STDQLNKIMP (350 aa)) lie on the Cytoplasmic side of the membrane. The interval 290–375 (KMLILPPVPV…HEKSLNIFGA (86 aa)) is required for JAK2 binding. A Box 1 motif motif is present at residues 293–301 (ILPPVPVPK). Positions 336–345 (DSWVEFIELD) match the UbE motif motif. The residue at position 337 (Ser337) is a Phosphoserine. Phosphotyrosine is present on residues Tyr483 and Tyr591.

It belongs to the type I cytokine receptor family. Type 1 subfamily. In terms of assembly, on growth hormone (GH) binding, forms homodimers and binds JAK2 via a box 1-containing domain. The soluble form (GHBP) is produced by phorbol ester-promoted proteolytic cleavage at the cell surface (shedding) by ADAM17/TACE. Shedding is inhibited by growth hormone (GH) binding to the receptor probably due to a conformational change in GHR rendering the receptor inaccessible to ADAM17. In terms of processing, on GH binding, phosphorylated on tyrosine residues in the cytoplasmic domain by JAK2. Post-translationally, ubiquitinated by the ECS(SOCS2) complex following ligand-binding and phosphorylation by JAK2, leading to its degradation by the proteasome. Regulation by the ECS(SOCS2) complex acts as a negative feedback loop of growth hormone receptor signaling. Ubiquitination is not sufficient for GHR internalization.

It localises to the cell membrane. Its subcellular location is the secreted. Its function is as follows. Receptor for pituitary gland growth hormone (GH1) involved in regulating postnatal body growth. On ligand binding, couples to the JAK2/STAT5 pathway. The soluble form (GHBP) acts as a reservoir of growth hormone in plasma and may be a modulator/inhibitor of GH signaling. This is Growth hormone receptor (GHR) from Bos indicus (Zebu).